We begin with the raw amino-acid sequence, 297 residues long: Aspartate carbamoyltransferase catalytic subunit (297 aa).

Carbamoyl phosphate contacts are provided by R49 and T50. An L-aspartate-binding site is contributed by K77. The carbamoyl phosphate site is built by R99, H129, and Q132. L-aspartate is bound by residues R162 and R215. The carbamoyl phosphate site is built by G256 and P257.

This sequence belongs to the aspartate/ornithine carbamoyltransferase superfamily. ATCase family. In terms of assembly, heterododecamer (2C3:3R2) of six catalytic PyrB chains organized as two trimers (C3), and six regulatory PyrI chains organized as three dimers (R2).

The catalysed reaction is carbamoyl phosphate + L-aspartate = N-carbamoyl-L-aspartate + phosphate + H(+). It functions in the pathway pyrimidine metabolism; UMP biosynthesis via de novo pathway; (S)-dihydroorotate from bicarbonate: step 2/3. In terms of biological role, catalyzes the condensation of carbamoyl phosphate and aspartate to form carbamoyl aspartate and inorganic phosphate, the committed step in the de novo pyrimidine nucleotide biosynthesis pathway. This is Aspartate carbamoyltransferase catalytic subunit from Legionella pneumophila subsp. pneumophila (strain Philadelphia 1 / ATCC 33152 / DSM 7513).